A 61-amino-acid chain; its full sequence is Nakoroxin (61 aa).

4 disulfides stabilise this stretch: Cys-3–Cys-19, Cys-12–Cys-37, Cys-41–Cys-49, and Cys-50–Cys-55.

The protein belongs to the three-finger toxin family. Short-chain subfamily. In terms of tissue distribution, expressed by the venom gland.

The protein localises to the secreted. Shows no cytotoxicity and does not inhibit the binding of alpha-bungarotoxin to nicotinic acetylcholine receptors of muscle and alpha-7/CHRNA7 types. However, it potentiates the binding of alpha-bungarotoxin to the acetylcholine-binding protein from Lymnaea stagnalis. The polypeptide is Nakoroxin (Naja kaouthia (Monocled cobra)).